Here is a 2198-residue protein sequence, read N- to C-terminus: RNA-directed RNA polymerase L (2198 aa).

Residues 26–284 (KEALLSQVEV…AHSDSLAPEC (259 aa)) form an endonuclease region. Mn(2+) is bound by residues E51, D89, and E102. K115 is an active-site residue. Residues 1161–1359 (CDMKMAVNNG…FLSSKFNKFV (199 aa)) form the RdRp catalytic domain. D1319 contacts Mg(2+).

The protein belongs to the Bunyavirales RNA polymerase family. As to quaternary structure, homomultimer; the oligomeric structure is essential for the polymerase activity. Interacts with nucleoprotein N. Interacts with protein Z; this interaction inhibits viral transcription and replication, Z partially blocks the product exit tunnel for the releasing nascent RNA product. Requires Mn(2+) as cofactor. It depends on Mg(2+) as a cofactor.

Its subcellular location is the virion. The protein localises to the host cytoplasm. It carries out the reaction RNA(n) + a ribonucleoside 5'-triphosphate = RNA(n+1) + diphosphate. RNA-dependent RNA polymerase, which is responsible for the replication and transcription of the viral RNA genome using antigenomic RNA as an intermediate. During transcription, synthesizes subgenomic RNAs and assures their capping by a cap-snatching mechanism, which involves the endonuclease activity cleaving the host capped pre-mRNAs. These short capped RNAs are then used as primers for viral transcription. The 3'-end of subgenomic mRNAs molecules are heterogeneous and not polyadenylated. The replicase function is to direct synthesis of antigenomic and genomic RNA which are encapsidated and non capped. As a consequence of the use of the same enzyme for both transcription and replication, these mechanisms need to be well coordinated. These processes may be regulated by proteins N and Z in a dose-dependent manner. Z protein inhibits the viral polymerase L und thus the viral transcription and RNA synthesis. This is RNA-directed RNA polymerase L from Homo sapiens (Human).